We begin with the raw amino-acid sequence, 99 residues long: Plastocyanin (99 aa).

The 99-residue stretch at 1–99 (LDVLLGGDDG…AGMVGKVTVN (99 aa)) folds into the Plastocyanin-like domain. Cu cation contacts are provided by His37, Cys84, His87, and Met92.

This sequence belongs to the plastocyanin family. Requires Cu(2+) as cofactor.

Its subcellular location is the plastid. The protein resides in the chloroplast thylakoid membrane. In terms of biological role, participates in electron transfer between P700 and the cytochrome b6-f complex in photosystem I. This chain is Plastocyanin (PETE), found in Solanum tuberosum (Potato).